We begin with the raw amino-acid sequence, 191 residues long: Gastrokine-3 (191 aa).

The signal sequence occupies residues 1–30 (MPLHSLERDNMRRLIAPSILVTVFLVPALA). An N-linked (GlcNAc...) asparagine glycan is attached at N33. The 93-residue stretch at 63–155 (NSVQSEWDGV…LCRAVPTYFA (93 aa)) folds into the BRICHOS domain. C90 and C147 form a disulfide bridge.

It belongs to the gastrokine family. As to expression, expressed in stomach. Present in mucus cells at the base of antral glands, and Brunner glands of the duodenum. Present at lower levels in the mucus neck cell region of the fundus (at protein level).

It is found in the secreted. Functionally, inhibits gastric epithelial cell proliferation. The polypeptide is Gastrokine-3 (Gkn3) (Mus musculus (Mouse)).